Here is a 48-residue protein sequence, read N- to C-terminus: Small, acid-soluble spore protein N (48 aa).

Residues 1–48 are disordered; that stretch reads MGINKKDGQPQYAPSHLGTKPVKYKRNKGEKFHDKSNGHPIVMQTKGE. The segment covering 27 to 37 has biased composition (basic and acidic residues); it reads NKGEKFHDKSN.

The protein belongs to the SspN family.

The protein localises to the spore core. The protein is Small, acid-soluble spore protein N of Bacillus velezensis (strain DSM 23117 / BGSC 10A6 / LMG 26770 / FZB42) (Bacillus amyloliquefaciens subsp. plantarum).